Here is a 416-residue protein sequence, read N- to C-terminus: PTS system N-acetylglucosamine-specific EIIC component (416 aa).

Residues 16–406 (SGLFQGLQKV…FNLKTPGREP (391 aa)) form the PTS EIIC type-1 domain. The next 10 membrane-spanning stretches (helical) occupy residues 68 to 88 (AGGA…AIGF), 96 to 116 (TALA…AFPV), 130 to 150 (TYND…AVLW), 170 to 190 (LVPI…GLVW), 196 to 216 (GISN…ALFG), 266 to 286 (IFQA…ALAM), 298 to 318 (VLGM…TEPI), 323 to 343 (MFIA…SMAI), 344 to 364 (TWGL…DYAL), and 375 to 395 (IIPI…FAIV).

The protein resides in the cell membrane. The phosphoenolpyruvate-dependent sugar phosphotransferase system (sugar PTS), a major carbohydrate active transport system, catalyzes the phosphorylation of incoming sugar substrates concomitantly with their translocation across the cell membrane. This system is involved in N-acetylglucosamine (GlcNAc) transport. High-affinity permease, which exhibits a narrow specificity for GlcNAc. Essential for C-signaling between vegetative growth and development. In Streptomyces coelicolor (strain ATCC BAA-471 / A3(2) / M145), this protein is PTS system N-acetylglucosamine-specific EIIC component.